Consider the following 64-residue polypeptide: Cytochrome c oxidase subunit 5C-2 (64 aa).

A helical transmembrane segment spans residues 15 to 34 (SVVKELVIGTVLGLAAGGLW).

Belongs to the cytochrome c oxidase subunit 5C family.

It localises to the mitochondrion inner membrane. Its function is as follows. This protein is one of the nuclear-coded polypeptide chains of cytochrome c oxidase, the terminal oxidase in mitochondrial electron transport. This Helianthus annuus (Common sunflower) protein is Cytochrome c oxidase subunit 5C-2 (COX5C2).